Consider the following 249-residue polypeptide: 15,16-dihydrobiliverdin:ferredoxin oxidoreductase (249 aa).

Belongs to the HY2 family.

It catalyses the reaction 15,16-dihydrobiliverdin + oxidized 2[4Fe-4S]-[ferredoxin] = biliverdin IXalpha + reduced 2[4Fe-4S]-[ferredoxin] + 2 H(+). Functionally, catalyzes the two-electron reduction of biliverdin IX-alpha at the C15 methine bridge. The chain is 15,16-dihydrobiliverdin:ferredoxin oxidoreductase from Prochlorococcus marinus (strain MIT 9303).